The primary structure comprises 870 residues: DNA mismatch repair protein MutS (870 aa).

621-628 serves as a coordination point for ATP; it reads GPNMAGKS. The segment at 813-834 is disordered; it reads GAPRIAKSRRQRTPDPSPQFSL.

This sequence belongs to the DNA mismatch repair MutS family.

Functionally, this protein is involved in the repair of mismatches in DNA. It is possible that it carries out the mismatch recognition step. This protein has a weak ATPase activity. This is DNA mismatch repair protein MutS from Pelobacter propionicus (strain DSM 2379 / NBRC 103807 / OttBd1).